The sequence spans 237 residues: Orotidine 5'-phosphate decarboxylase (237 aa).

Substrate is bound by residues Asp-11, Lys-34, 61 to 70 (DLKLHDIPNT), Thr-123, Arg-185, Gln-194, Gly-214, and Arg-215. The active-site Proton donor is Lys-63.

Belongs to the OMP decarboxylase family. Type 1 subfamily. Homodimer.

The enzyme catalyses orotidine 5'-phosphate + H(+) = UMP + CO2. It functions in the pathway pyrimidine metabolism; UMP biosynthesis via de novo pathway; UMP from orotate: step 2/2. Its function is as follows. Catalyzes the decarboxylation of orotidine 5'-monophosphate (OMP) to uridine 5'-monophosphate (UMP). In Ligilactobacillus salivarius (strain UCC118) (Lactobacillus salivarius), this protein is Orotidine 5'-phosphate decarboxylase.